Here is a 212-residue protein sequence, read N- to C-terminus: 3-isopropylmalate dehydratase small subunit 2 (212 aa).

It belongs to the LeuD family. LeuD type 1 subfamily. In terms of assembly, heterodimer of LeuC and LeuD.

The enzyme catalyses (2R,3S)-3-isopropylmalate = (2S)-2-isopropylmalate. It participates in amino-acid biosynthesis; L-leucine biosynthesis; L-leucine from 3-methyl-2-oxobutanoate: step 2/4. In terms of biological role, catalyzes the isomerization between 2-isopropylmalate and 3-isopropylmalate, via the formation of 2-isopropylmaleate. The polypeptide is 3-isopropylmalate dehydratase small subunit 2 (Chromobacterium violaceum (strain ATCC 12472 / DSM 30191 / JCM 1249 / CCUG 213 / NBRC 12614 / NCIMB 9131 / NCTC 9757 / MK)).